The sequence spans 404 residues: Biflaviolin synthase CYP158A2 (404 aa).

Positions 288 and 293 each coordinate flaviolin. C353 is a binding site for heme.

The protein belongs to the cytochrome P450 family. The cofactor is heme.

The catalysed reaction is 2 flaviolin + 2 reduced [2Fe-2S]-[ferredoxin] + O2 + H(+) = 3,3'-biflaviolin + 2 oxidized [2Fe-2S]-[ferredoxin] + 2 H2O. It catalyses the reaction 2 flaviolin + 2 reduced [2Fe-2S]-[ferredoxin] + O2 + H(+) = 3,8'-biflaviolin + 2 oxidized [2Fe-2S]-[ferredoxin] + 2 H2O. The protein operates within pigment biosynthesis. Its function is as follows. Catalyzes oxidative C-C coupling reaction to polymerize flaviolin and form highly conjugated pigments which protect the soil bacterium from deleterious effects of UV irradiation (three isomers of biflaviolin and one triflaviolin). The polypeptide is Biflaviolin synthase CYP158A2 (Streptomyces coelicolor (strain ATCC BAA-471 / A3(2) / M145)).